The following is a 72-amino-acid chain: Translation initiation factor IF-1 1 (72 aa).

The S1-like domain maps to 1–72 (MAKEDRIEMQ…SRARIIFRAK (72 aa)).

This sequence belongs to the IF-1 family. As to quaternary structure, component of the 30S ribosomal translation pre-initiation complex which assembles on the 30S ribosome in the order IF-2 and IF-3, IF-1 and N-formylmethionyl-tRNA(fMet); mRNA recruitment can occur at any time during PIC assembly.

It is found in the cytoplasm. Functionally, one of the essential components for the initiation of protein synthesis. Stabilizes the binding of IF-2 and IF-3 on the 30S subunit to which N-formylmethionyl-tRNA(fMet) subsequently binds. Helps modulate mRNA selection, yielding the 30S pre-initiation complex (PIC). Upon addition of the 50S ribosomal subunit IF-1, IF-2 and IF-3 are released leaving the mature 70S translation initiation complex. The protein is Translation initiation factor IF-1 1 of Methylobacillus flagellatus (strain ATCC 51484 / DSM 6875 / VKM B-1610 / KT).